The sequence spans 489 residues: Cytochrome P450 monooxygenase orf5 (489 aa).

The chain crosses the membrane as a helical span at residues 13–35 (FVRLLAFHLIGLFVSITVYRLFF). 4 N-linked (GlcNAc...) asparagine glycosylation sites follow: Asn37, Asn118, Asn171, and Asn345. Residue Cys428 coordinates heme.

This sequence belongs to the cytochrome P450 family. Heme is required as a cofactor.

Its subcellular location is the membrane. The protein operates within mycotoxin biosynthesis. Functionally, cytochrome P450 monooxygenase; part of the gene cluster that mediates the biosynthesis of brefeldin A (BFA), a protein transport inhibitor that shows antiviral, antifungal, and antitumor properties. The proposed biosynthesis of BFA involves formation of an acyclic polyketide chain that is differentially tailored throughout the backbone. The highly reducing polyketide synthase Bref-PKS is proposed to synthesize the precisely reduced octaketide precursor, which could then be directly offloaded by the thiohydrolase enzyme Bref-TH followed by a cytochrome P450 monooxygenase-mediated formation of the cyclopentane ring and macrocyclization to afford 7-deoxy BFA. Alternatively, the first ring annulation can also occur on the ACP-tethered intermediate before the thiohydrolase release and lactonization. The C7-hydroxylation by another cytochrome P450 monooxygenase is believed to be the final step in the process to obtain the final structure of BFA. In addition to the HRPKS Bref-PKS and the thiohydrolase Bref-TH, the brefeldin A biosynthesis cluster contains 4 cytochrome p450 monooxygenases (called orf3 to orf6), as well a the probable cluster-specific transcription regulator orf8. The sequence is that of Cytochrome P450 monooxygenase orf5 from Eupenicillium brefeldianum (Penicillium brefeldianum).